Consider the following 257-residue polypeptide: Homeobox protein goosecoid (257 aa).

A DNA-binding region (homeobox) is located at residues 160–219 (KRRHRTIFTDEQLEALENLFQETKYPDVGTREQLARKVHLREEKVEVWFKNRRAKWRRQK). The interval 213–257 (AKWRRQKRSSSEESENAEKWNKTSSSKASPEKREEEGKSDLDSDS) is disordered. Residues 241–257 (SPEKREEEGKSDLDSDS) show a composition bias toward basic and acidic residues.

Belongs to the paired homeobox family. Bicoid subfamily.

It localises to the nucleus. Its function is as follows. Regulates chordin (CHRD). May play a role in spatial programing within discrete embryonic fields or lineage compartments during organogenesis. In concert with NKX3-2, plays a role in defining the structural components of the middle ear; required for the development of the entire tympanic ring. Probably involved in the regulatory networks that define neural crest cell fate specification and determine mesoderm cell lineages in mammals. This Pongo pygmaeus (Bornean orangutan) protein is Homeobox protein goosecoid (GSC).